Consider the following 258-residue polypeptide: Venom plasminogen activator GPV-PA (258 aa).

Positions 1-18 are cleaved as a signal peptide; the sequence is MVLIRVLANLLILQLSYA. The propeptide occupies 19–24; sequence QKSSEL. In terms of domain architecture, Peptidase S1 spans 25–249; that stretch reads VFGGRPCNIN…YTDWIQSIIA (225 aa). 6 disulfides stabilise this stretch: Cys31–Cys163, Cys50–Cys66, Cys98–Cys256, Cys142–Cys210, Cys174–Cys189, and Cys200–Cys225. Asn44 carries an N-linked (GlcNAc...) asparagine glycan. Residues His65 and Asp110 each act as charge relay system in the active site. 2 N-linked (GlcNAc...) asparagine glycosylation sites follow: Asn121 and Asn185. Residue Ser204 is the Charge relay system of the active site.

Belongs to the peptidase S1 family. Snake venom subfamily. In terms of assembly, monomer. In terms of tissue distribution, expressed by the venom gland.

The protein resides in the secreted. Its function is as follows. Snake venom serine protease that activates plasminogen. The sequence is that of Venom plasminogen activator GPV-PA from Trimeresurus albolabris (White-lipped pit viper).